The chain runs to 228 residues: Expansin-B13 (228 aa).

The signal sequence occupies residues 1–22 (MASSSLLLASVVVAAMVSAVSC). A glycan (N-linked (GlcNAc...) asparagine) is linked at asparagine 32. The 112-residue stretch at 61–172 (SGACGYKDVD…KEKGSEEWKA (112 aa)) folds into the Expansin-like EG45 domain. 2 cysteine pairs are disulfide-bonded: cysteine 64/cysteine 92 and cysteine 100/cysteine 106. One can recognise an Expansin-like CBD domain in the interval 142–223 (GKDEELLKYV…GWKADSVYKS (82 aa)).

The protein belongs to the expansin family. Expansin B subfamily.

The protein resides in the secreted. It is found in the cell wall. It localises to the membrane. Functionally, may cause loosening and extension of plant cell walls by disrupting non-covalent bonding between cellulose microfibrils and matrix glucans. No enzymatic activity has been found. May be required for rapid internodal elongation in deepwater rice during submergence. The polypeptide is Expansin-B13 (EXPB13) (Oryza sativa subsp. japonica (Rice)).